The chain runs to 117 residues: Protein Wnt-6 (117 aa).

Ser-1 carries O-palmitoleoyl serine; by PORCN lipidation. The cysteines at positions 83 and 98 are disulfide-linked. Asn-84 carries N-linked (GlcNAc...) asparagine glycosylation.

It belongs to the Wnt family. Post-translationally, palmitoleoylation is required for efficient binding to frizzled receptors. Depalmitoleoylation leads to Wnt signaling pathway inhibition.

The protein localises to the secreted. It is found in the extracellular space. It localises to the extracellular matrix. Ligand for members of the frizzled family of seven transmembrane receptors. Probable developmental protein. May be a signaling molecule which affects the development of discrete regions of tissues. Is likely to signal over only few cell diameters. This chain is Protein Wnt-6 (wnt6), found in Thunnus thynnus (Atlantic bluefin tuna).